The following is a 206-amino-acid chain: Glutathione peroxidase 1 (206 aa).

S37 carries the phosphoserine modification. Residue U52 is part of the active site. Position 52 (U52) is a non-standard amino acid, selenocysteine. N6-acetyllysine; alternate occurs at positions 91, 117, and 151. 3 positions are modified to N6-succinyllysine; alternate: K91, K117, and K151. S200 and S204 each carry phosphoserine.

It belongs to the glutathione peroxidase family. In terms of assembly, homotetramer. Interacts with MIEN1. During periods of oxidative stress, Sec-52 may react with a superoxide radical, irreversibly lose hydroselenide and be converted to dehydroalanine.

It is found in the cytoplasm. The protein resides in the mitochondrion. It catalyses the reaction 2 glutathione + H2O2 = glutathione disulfide + 2 H2O. It carries out the reaction a hydroperoxy polyunsaturated fatty acid + 2 glutathione = a hydroxy polyunsaturated fatty acid + glutathione disulfide + H2O. The catalysed reaction is tert-butyl hydroperoxide + 2 glutathione = tert-butanol + glutathione disulfide + H2O. The enzyme catalyses cumene hydroperoxide + 2 glutathione = 2-phenylpropan-2-ol + glutathione disulfide + H2O. It catalyses the reaction (13S)-hydroperoxy-(9Z,11E)-octadecadienoate + 2 glutathione = (13S)-hydroxy-(9Z,11E)-octadecadienoate + glutathione disulfide + H2O. It carries out the reaction (9S)-hydroperoxy-(10E,12Z)-octadecadienoate + 2 glutathione = (9S)-hydroxy-(10E,12Z)-octadecadienoate + glutathione disulfide + H2O. The catalysed reaction is (5S)-hydroperoxy-(6E,8Z,11Z,14Z)-eicosatetraenoate + 2 glutathione = (5S)-hydroxy-(6E,8Z,11Z,14Z)-eicosatetraenoate + glutathione disulfide + H2O. The enzyme catalyses (12S)-hydroperoxy-(5Z,8Z,10E,14Z)-eicosatetraenoate + 2 glutathione = (12S)-hydroxy-(5Z,8Z,10E,14Z)-eicosatetraenoate + glutathione disulfide + H2O. It catalyses the reaction (12R)-hydroperoxy-(5Z,8Z,10E,14Z)-eicosatetraenoate + 2 glutathione = (12R)-hydroxy-(5Z,8Z,10E,14Z)-eicosatetraenoate + glutathione disulfide + H2O. It carries out the reaction (15S)-hydroperoxy-(5Z,8Z,11Z,13E)-eicosatetraenoate + 2 glutathione = (15S)-hydroxy-(5Z,8Z,11Z,13E)-eicosatetraenoate + glutathione disulfide + H2O. The catalysed reaction is (5S)-hydroperoxy-(6E,8Z,11Z,14Z,17Z)-eicosapentaenoate + 2 glutathione = (5S)-hydroxy-(6E,8Z,11Z,14Z,17Z)-eicosapentaenoate + glutathione disulfide + H2O. The enzyme catalyses (12S)-hydroperoxy-(5Z,8Z,10E,14Z,17Z)-eicosapentaenoate + 2 glutathione = (12S)-hydroxy-(5Z,8Z,10E,14Z,17Z)-eicosapentaenoate + glutathione disulfide + H2O. It catalyses the reaction (15S)-hydroperoxy-(5Z,8Z,11Z,13E,17Z)-eicosapentaenoate + 2 glutathione = (15S)-hydroxy-(5Z,8Z,11Z,13E,17Z)-eicosapentaenoate + glutathione disulfide + H2O. It carries out the reaction (15S)-hydroperoxy-(11Z,13E)-eicosadienoate + 2 glutathione = (15S)-hydroxy-(11Z,13E)-eicosadienoate + glutathione disulfide + H2O. The catalysed reaction is (17S)-hydroperoxy-(4Z,7Z,10Z,13Z,15E,19Z)-docosahexaenoate + 2 glutathione = (17S)-hydroxy-(4Z,7Z,10Z,13Z,15E,19Z)-docosahexaenoate + glutathione disulfide + H2O. In terms of biological role, catalyzes the reduction of hydroperoxides in a glutathione-dependent manner thus regulating cellular redox homeostasis. Can reduce small soluble hydroperoxides such as H2O2, cumene hydroperoxide and tert-butyl hydroperoxide, as well as several fatty acid-derived hydroperoxides. In platelets catalyzes the reduction of 12-hydroperoxyeicosatetraenoic acid, the primary product of the arachidonate 12-lipoxygenase pathway. The protein is Glutathione peroxidase 1 (GPX1) of Sus scrofa (Pig).